Here is a 374-residue protein sequence, read N- to C-terminus: Chaperone protein DnaJ (374 aa).

Residues 5–70 (DFYEILGLGK…QKRDAYDRYG (66 aa)) form the J domain. The interval 28–47 (LAMKHHPDRNPDSKGAEDKF) is disordered. Residues 35-47 (DRNPDSKGAEDKF) show a composition bias toward basic and acidic residues. A CR-type zinc finger spans residues 134–212 (GYDTTIRVPS…CSGAGKIKRN (79 aa)). Zn(2+) is bound by residues Cys-147, Cys-150, Cys-164, Cys-167, Cys-186, Cys-189, Cys-200, and Cys-203. 4 CXXCXGXG motif repeats span residues 147 to 154 (CETCDGSG), 164 to 171 (CTTCGGHG), 186 to 193 (CPKCHGSG), and 200 to 207 (CTACSGAG).

This sequence belongs to the DnaJ family. In terms of assembly, homodimer. The cofactor is Zn(2+).

The protein resides in the cytoplasm. Its function is as follows. Participates actively in the response to hyperosmotic and heat shock by preventing the aggregation of stress-denatured proteins and by disaggregating proteins, also in an autonomous, DnaK-independent fashion. Unfolded proteins bind initially to DnaJ; upon interaction with the DnaJ-bound protein, DnaK hydrolyzes its bound ATP, resulting in the formation of a stable complex. GrpE releases ADP from DnaK; ATP binding to DnaK triggers the release of the substrate protein, thus completing the reaction cycle. Several rounds of ATP-dependent interactions between DnaJ, DnaK and GrpE are required for fully efficient folding. Also involved, together with DnaK and GrpE, in the DNA replication of plasmids through activation of initiation proteins. This is Chaperone protein DnaJ from Herminiimonas arsenicoxydans.